The primary structure comprises 236 residues: Baculoviral IAP repeat-containing protein 8 (236 aa).

One copy of the BIR repeat lies at 7–70 (WLITFGTWMY…KWYPGCKYLL (64 aa)). The Zn(2+) site is built by C39, C42, H59, and C66. The RING-type zinc finger occupies 189–224 (CKICMDRHIAVVFIPCGHLVTCKQCAEAVDRCPMCN).

The protein belongs to the IAP family. As to quaternary structure, binds to caspase-9.

Its subcellular location is the cytoplasm. Its function is as follows. Protects against apoptosis mediated by BAX. This chain is Baculoviral IAP repeat-containing protein 8 (BIRC8), found in Gorilla gorilla gorilla (Western lowland gorilla).